Here is a 283-residue protein sequence, read N- to C-terminus: Nucleoid occlusion protein (283 aa).

The H-T-H motif DNA-binding region spans 148–167 (EALAQRLGKGQSTIANKLRL).

This sequence belongs to the ParB family.

The protein resides in the cytoplasm. It is found in the nucleoid. Effects nucleoid occlusion by binding relatively nonspecifically to DNA and preventing the assembly of the division machinery in the vicinity of the nucleoid, especially under conditions that disturb the cell cycle. It helps to coordinate cell division and chromosome segregation by preventing the formation of the Z ring through the nucleoid, which would cause chromosome breakage. The protein is Nucleoid occlusion protein (noc) of Bacillus subtilis (strain 168).